We begin with the raw amino-acid sequence, 874 residues long: Protein translocase subunit SecA (874 aa).

ATP contacts are provided by residues Gln-85, 103-107 (GEGKT), and Asp-492. A compositionally biased stretch (basic and acidic residues) spans 839–854 (EEGPKKPYRREQKIGR). Positions 839–864 (EEGPKKPYRREQKIGRNDPCPCGSGK) are disordered. Zn(2+) contacts are provided by Cys-858, Cys-860, Cys-869, and Cys-870.

The protein belongs to the SecA family. Monomer and homodimer. Part of the essential Sec protein translocation apparatus which comprises SecA, SecYEG and auxiliary proteins SecDF. Other proteins may also be involved. The cofactor is Zn(2+).

It is found in the cell membrane. The protein localises to the cytoplasm. The catalysed reaction is ATP + H2O + cellular proteinSide 1 = ADP + phosphate + cellular proteinSide 2.. In terms of biological role, part of the Sec protein translocase complex. Interacts with the SecYEG preprotein conducting channel. Has a central role in coupling the hydrolysis of ATP to the transfer of proteins into and across the cell membrane, serving as an ATP-driven molecular motor driving the stepwise translocation of polypeptide chains across the membrane. In Carboxydothermus hydrogenoformans (strain ATCC BAA-161 / DSM 6008 / Z-2901), this protein is Protein translocase subunit SecA.